The sequence spans 319 residues: Cobalamin biosynthesis protein CbiB (319 aa).

A run of 4 helical transmembrane segments spans residues Val-56–Ala-76, Trp-82–Ala-102, Val-153–Ala-173, and Leu-296–Ser-316.

This sequence belongs to the CobD/CbiB family.

The protein resides in the cell membrane. Its pathway is cofactor biosynthesis; adenosylcobalamin biosynthesis. In terms of biological role, converts cobyric acid to cobinamide by the addition of aminopropanol on the F carboxylic group. However, the true cosubstrate could be (R)-1-amino-2-propanol O-2-phosphate, leading to cobinamide phosphate. This Salmonella paratyphi A (strain ATCC 9150 / SARB42) protein is Cobalamin biosynthesis protein CbiB.